We begin with the raw amino-acid sequence, 2274 residues long: Nucleolar pre-ribosomal-associated protein 1 (2274 aa).

Residues 1 to 23 form a disordered region; sequence MGVPKRKASEGPSSAASPAGTVK. A compositionally biased stretch (low complexity) spans 10–20; that stretch reads EGPSSAASPAG. 2 positions are modified to phosphoserine: S17 and S1141. The interval 2020–2042 is disordered; it reads VVAAQARGPRGRKRRHGGLEETA.

It localises to the nucleus. It is found in the nucleolus. In Mus musculus (Mouse), this protein is Nucleolar pre-ribosomal-associated protein 1 (Urb1).